The primary structure comprises 451 residues: UDP-N-acetylmuramoylalanine--D-glutamate ligase (451 aa).

118–124 (GTKGKST) provides a ligand contact to ATP.

The protein belongs to the MurCDEF family.

The protein localises to the cytoplasm. It catalyses the reaction UDP-N-acetyl-alpha-D-muramoyl-L-alanine + D-glutamate + ATP = UDP-N-acetyl-alpha-D-muramoyl-L-alanyl-D-glutamate + ADP + phosphate + H(+). Its pathway is cell wall biogenesis; peptidoglycan biosynthesis. Functionally, cell wall formation. Catalyzes the addition of glutamate to the nucleotide precursor UDP-N-acetylmuramoyl-L-alanine (UMA). This Borreliella afzelii (strain PKo) (Borrelia afzelii) protein is UDP-N-acetylmuramoylalanine--D-glutamate ligase.